The sequence spans 579 residues: Acyl-coenzyme A synthetase ACSM5, mitochondrial (579 aa).

The N-terminal 26 residues, 1–26 (MRPWLRHLVLQALRNSRAFCGSHGKP), are a transit peptide targeting the mitochondrion. Lys-97 bears the N6-acetyllysine; alternate mark. Residue Lys-97 is modified to N6-succinyllysine; alternate. At Lys-152 the chain carries N6-acetyllysine. An ATP-binding site is contributed by 230–238 (TSGTTGAPK). The residue at position 303 (Lys-303) is an N6-acetyllysine; alternate. Lys-303 carries the N6-succinyllysine; alternate modification. Residues 368 to 373 (EGYGQS), Asp-455, Arg-470, and Lys-566 contribute to the ATP site.

It belongs to the ATP-dependent AMP-binding enzyme family. The cofactor is Mg(2+). Mn(2+) serves as cofactor. Detected in kidney and liver.

The protein localises to the mitochondrion matrix. It carries out the reaction a medium-chain fatty acid + ATP + CoA = a medium-chain fatty acyl-CoA + AMP + diphosphate. Its function is as follows. Catalyzes the activation of fatty acids by CoA to produce an acyl-CoA, the first step in fatty acid metabolism. The protein is Acyl-coenzyme A synthetase ACSM5, mitochondrial (ACSM5) of Homo sapiens (Human).